A 634-amino-acid polypeptide reads, in one-letter code: Polyadenylate-binding protein 1A (634 aa).

4 consecutive RRM domains span residues 11-89 (ASLY…WSQR), 99-175 (GNIF…RFKS), 191-268 (TNVY…RAQK), and 294-370 (VNLY…LAQR). In terms of domain architecture, PABC spans 541–618 (QEPLTASMLA…AVAVLQAHQA (78 aa)).

The protein belongs to the polyadenylate-binding protein type-1 family. Interacts with ybx1; interaction recruits pabpc1a on C5-methylcytosine (m5C)-containing mRNAs, preventing their degradation.

It is found in the cytoplasm. Its function is as follows. Binds the poly(A) tail of mRNA. Prevents mRNA deadenylation and confers poly(A) stability. Binds to N6-methyladenosine (m6A)-containing mRNAs. Stimulates the translation of mRNAs to which it is bound, acting, at least in part, with dazl. Involved in the maternal-to-zygotic transition in early embryo via interaction with ybx1: interaction recruits pabpc1a on C5-methylcytosine (m5C)-containing maternal mRNAs, preventing their degradation. The polypeptide is Polyadenylate-binding protein 1A (Danio rerio (Zebrafish)).